Reading from the N-terminus, the 357-residue chain is CD4+ T-cell-stimulating antigen (357 aa).

Positions 1-22 are cleaved as a signal peptide; the sequence is MKKRTFALALSMIIASGVILGA. C23 carries the N-palmitoyl cysteine lipid modification. C23 carries the S-diacylglycerol cysteine lipid modification.

This sequence belongs to the BMP lipoprotein family.

The protein localises to the cell membrane. The polypeptide is CD4+ T-cell-stimulating antigen (tcsA) (Listeria monocytogenes serovar 1/2a (strain ATCC BAA-679 / EGD-e)).